A 228-amino-acid polypeptide reads, in one-letter code: Urease accessory protein UreF (228 aa).

This sequence belongs to the UreF family. In terms of assembly, ureD, UreF and UreG form a complex that acts as a GTP-hydrolysis-dependent molecular chaperone, activating the urease apoprotein by helping to assemble the nickel containing metallocenter of UreC. The UreE protein probably delivers the nickel.

It is found in the cytoplasm. In terms of biological role, required for maturation of urease via the functional incorporation of the urease nickel metallocenter. The chain is Urease accessory protein UreF from Prochlorococcus marinus (strain MIT 9301).